The sequence spans 265 residues: Sulfur carrier protein FdhD (265 aa).

Residue C107 is the Cysteine persulfide intermediate of the active site.

The protein belongs to the FdhD family.

The protein resides in the cytoplasm. Required for formate dehydrogenase (FDH) activity. Acts as a sulfur carrier protein that transfers sulfur from IscS to the molybdenum cofactor prior to its insertion into FDH. The sequence is that of Sulfur carrier protein FdhD from Staphylococcus aureus (strain JH9).